Consider the following 150-residue polypeptide: Sec-independent protein translocase protein TatB (150 aa).

Residues 1–21 (MFDLSWSEIALVGVVALIVIG) traverse the membrane as a helical segment. Positions 77–86 (KIDQAIDPDG) are enriched in basic and acidic residues. The segment at 77–150 (KIDQAIDPDG…RTDGSLPPQD (74 aa)) is disordered. Residues 109 to 135 (AAPPSLPPQAPAQPVPPATGAAPPSPS) show a composition bias toward pro residues.

The protein belongs to the TatB family. As to quaternary structure, the Tat system comprises two distinct complexes: a TatABC complex, containing multiple copies of TatA, TatB and TatC subunits, and a separate TatA complex, containing only TatA subunits. Substrates initially bind to the TatABC complex, which probably triggers association of the separate TatA complex to form the active translocon.

Its subcellular location is the cell inner membrane. Part of the twin-arginine translocation (Tat) system that transports large folded proteins containing a characteristic twin-arginine motif in their signal peptide across membranes. Together with TatC, TatB is part of a receptor directly interacting with Tat signal peptides. TatB may form an oligomeric binding site that transiently accommodates folded Tat precursor proteins before their translocation. In Rhodospirillum rubrum (strain ATCC 11170 / ATH 1.1.1 / DSM 467 / LMG 4362 / NCIMB 8255 / S1), this protein is Sec-independent protein translocase protein TatB.